A 349-amino-acid polypeptide reads, in one-letter code: Isopentenyl-diphosphate delta-isomerase (349 aa).

6 to 7 contributes to the substrate binding site; that stretch reads RK. FMN contacts are provided by residues 62-64, S93, and N122; that span reads AMT. Q152 lines the substrate pocket. A Mg(2+)-binding site is contributed by E153. Residues K184, T214, 258–259, and 280–281 each bind FMN; these read GG and AG.

It belongs to the IPP isomerase type 2 family. Homooctamer. Dimer of tetramers. The cofactor is FMN. It depends on NADPH as a cofactor. Mg(2+) serves as cofactor.

It is found in the cytoplasm. The catalysed reaction is isopentenyl diphosphate = dimethylallyl diphosphate. In terms of biological role, involved in the biosynthesis of isoprenoids. Catalyzes the 1,3-allylic rearrangement of the homoallylic substrate isopentenyl (IPP) to its allylic isomer, dimethylallyl diphosphate (DMAPP). This Bacillus subtilis (strain 168) protein is Isopentenyl-diphosphate delta-isomerase.